The primary structure comprises 326 residues: L-lactate dehydrogenase (326 aa).

NAD(+) is bound by residues valine 26, aspartate 47, lysine 52, tyrosine 78, and 92 to 93 (GA). The substrate site is built by glutamine 95 and arginine 101. NAD(+) is bound by residues threonine 114, 131 to 133 (ASN), and serine 156. 133 to 136 (NPVD) serves as a coordination point for substrate. Residue 161-164 (DTAR) coordinates substrate. Beta-D-fructose 1,6-bisphosphate contacts are provided by arginine 166 and histidine 181. Residue histidine 188 is the Proton acceptor of the active site. A Phosphotyrosine modification is found at tyrosine 233. Position 242 (threonine 242) interacts with substrate.

The protein belongs to the LDH/MDH superfamily. LDH family. As to quaternary structure, homotetramer.

Its subcellular location is the cytoplasm. It carries out the reaction (S)-lactate + NAD(+) = pyruvate + NADH + H(+). It functions in the pathway fermentation; pyruvate fermentation to lactate; (S)-lactate from pyruvate: step 1/1. With respect to regulation, allosterically activated by fructose 1,6-bisphosphate (FBP). Functionally, catalyzes the conversion of lactate to pyruvate. This chain is L-lactate dehydrogenase, found in Corynebacterium jeikeium (strain K411).